The sequence spans 448 residues: Exodeoxyribonuclease 7 large subunit (448 aa).

The protein belongs to the XseA family. Heterooligomer composed of large and small subunits.

Its subcellular location is the cytoplasm. It carries out the reaction Exonucleolytic cleavage in either 5'- to 3'- or 3'- to 5'-direction to yield nucleoside 5'-phosphates.. Bidirectionally degrades single-stranded DNA into large acid-insoluble oligonucleotides, which are then degraded further into small acid-soluble oligonucleotides. In Geobacillus kaustophilus (strain HTA426), this protein is Exodeoxyribonuclease 7 large subunit.